The primary structure comprises 1060 residues: DNA-directed RNA polymerase subunit beta (1060 aa).

The protein belongs to the RNA polymerase beta chain family. In plastids the minimal PEP RNA polymerase catalytic core is composed of four subunits: alpha, beta, beta', and beta''. When a (nuclear-encoded) sigma factor is associated with the core the holoenzyme is formed, which can initiate transcription.

The protein resides in the plastid. It localises to the chloroplast. The catalysed reaction is RNA(n) + a ribonucleoside 5'-triphosphate = RNA(n+1) + diphosphate. Its function is as follows. DNA-dependent RNA polymerase catalyzes the transcription of DNA into RNA using the four ribonucleoside triphosphates as substrates. In Helianthus annuus (Common sunflower), this protein is DNA-directed RNA polymerase subunit beta.